The sequence spans 134 residues: Global transcriptional regulator Spx (134 aa).

A disulfide bond links C10 and C13.

It belongs to the ArsC family. Spx subfamily. In terms of assembly, interacts with the C-terminal domain of the alpha subunit of the RNAP.

It is found in the cytoplasm. Functionally, global transcriptional regulator that plays a key role in stress response and exerts either positive or negative regulation of genes. Acts by interacting with the C-terminal domain of the alpha subunit of the RNA polymerase (RNAP). This interaction can enhance binding of RNAP to the promoter region of target genes and stimulate their transcription, or block interaction of RNAP with activator. This chain is Global transcriptional regulator Spx, found in Streptococcus pyogenes serotype M1.